Consider the following 210-residue polypeptide: uncharacterized protein (210 aa).

The PfpI endopeptidase domain maps to 4-180 (RKVYLYVFHT…AVEVLKKLDV (177 aa)). Cysteine 110 acts as the Nucleophile in catalysis.

The protein belongs to the peptidase C56 family.

This is an uncharacterized protein from Bacillus subtilis (strain 168).